The sequence spans 49 residues: Large ribosomal subunit protein bL33 (49 aa).

This sequence belongs to the bacterial ribosomal protein bL33 family.

The chain is Large ribosomal subunit protein bL33 from Clostridium beijerinckii (strain ATCC 51743 / NCIMB 8052) (Clostridium acetobutylicum).